Reading from the N-terminus, the 122-residue chain is Large ribosomal subunit protein uL14 (122 aa).

The protein belongs to the universal ribosomal protein uL14 family. As to quaternary structure, part of the 50S ribosomal subunit. Forms a cluster with proteins L3 and L19. In the 70S ribosome, L14 and L19 interact and together make contacts with the 16S rRNA in bridges B5 and B8.

Binds to 23S rRNA. Forms part of two intersubunit bridges in the 70S ribosome. This is Large ribosomal subunit protein uL14 from Salinibacter ruber (strain DSM 13855 / M31).